The following is an 820-amino-acid chain: LPS-assembly protein LptD (820 aa).

Residues 1–27 form a disordered region; that stretch reads MDLSSLPDPLRPTHSRLPARRRDRAEP. Residues 13-22 are compositionally biased toward basic residues; the sequence is THSRLPARRR.

It belongs to the LptD family. Component of the lipopolysaccharide transport and assembly complex. Interacts with LptE and LptA.

Its function is as follows. Together with LptE, is involved in the assembly of lipopolysaccharide (LPS) at the surface of the outer membrane. This is LPS-assembly protein LptD from Paracidovorax citrulli (strain AAC00-1) (Acidovorax citrulli).